The chain runs to 83 residues: Weak toxin DE-1 homolog 1 (83 aa).

A signal peptide spans 1-21 (MKPVLLTLVVVTIVCLDLGYT). 4 disulfide bridges follow: C24-C45, C38-C62, C64-C75, and C76-C81.

It belongs to the three-finger toxin family. Short-chain subfamily. Type I alpha-neurotoxin sub-subfamily. Expressed by the venom gland.

The protein localises to the secreted. Its function is as follows. Binds to muscle nicotinic acetylcholine receptor (nAChR) and inhibit acetylcholine from binding to the receptor, thereby impairing neuromuscular transmission. The polypeptide is Weak toxin DE-1 homolog 1 (Ophiophagus hannah (King cobra)).